Consider the following 273-residue polypeptide: Proteasome subunit beta (273 aa).

Positions 1 to 50 are cleaved as a propeptide — removed in mature form; by autocatalysis; it reads MRKDGARLALPLFDPRHDPGPDFAALVSRDAARTVPTSGDGSLGAQVPHG. Residue Thr51 is the Nucleophile of the active site.

This sequence belongs to the peptidase T1B family. The 20S proteasome core is composed of 14 alpha and 14 beta subunits that assemble into four stacked heptameric rings, resulting in a barrel-shaped structure. The two inner rings, each composed of seven catalytic beta subunits, are sandwiched by two outer rings, each composed of seven alpha subunits. The catalytic chamber with the active sites is on the inside of the barrel. Has a gated structure, the ends of the cylinder being occluded by the N-termini of the alpha-subunits. Is capped by the proteasome-associated ATPase, ARC.

Its subcellular location is the cytoplasm. It catalyses the reaction Cleavage of peptide bonds with very broad specificity.. The protein operates within protein degradation; proteasomal Pup-dependent pathway. The formation of the proteasomal ATPase ARC-20S proteasome complex, likely via the docking of the C-termini of ARC into the intersubunit pockets in the alpha-rings, may trigger opening of the gate for substrate entry. Interconversion between the open-gate and close-gate conformations leads to a dynamic regulation of the 20S proteasome proteolysis activity. In terms of biological role, component of the proteasome core, a large protease complex with broad specificity involved in protein degradation. The polypeptide is Proteasome subunit beta (Acidimicrobium ferrooxidans (strain DSM 10331 / JCM 15462 / NBRC 103882 / ICP)).